The primary structure comprises 453 residues: Aspartate aminotransferase, chloroplastic (453 aa).

Residues 1 to 44 (MASLMLSLGSTSLLPREINKDKLKLGTSASNPFLKAKSFSRVTM) constitute a chloroplast transit peptide. L-aspartate contacts are provided by Gly-85, Trp-181, and Asn-234. An N6-(pyridoxal phosphate)lysine modification is found at Lys-298. Arg-427 lines the L-aspartate pocket.

This sequence belongs to the class-I pyridoxal-phosphate-dependent aminotransferase family. As to quaternary structure, homodimer. Requires pyridoxal 5'-phosphate as cofactor.

It localises to the plastid. It is found in the chloroplast. The protein resides in the amyloplast. It catalyses the reaction L-aspartate + 2-oxoglutarate = oxaloacetate + L-glutamate. In terms of biological role, amino acid aminotransferase important for the metabolism of amino acids and Krebs-cycle related organic acids. No activity with D-Asp or D-Ala as amino donors. In plants, it is involved in nitrogen metabolism and in aspects of carbon and energy metabolism. The sequence is that of Aspartate aminotransferase, chloroplastic (ASP5) from Arabidopsis thaliana (Mouse-ear cress).